Consider the following 63-residue polypeptide: Cecropin-A1 (63 aa).

An N-terminal signal peptide occupies residues 1 to 23; that stretch reads MNFYNIFVFVALILAITIGQSEA. Arg62 carries the arginine amide modification.

This sequence belongs to the cecropin family.

It localises to the secreted. In terms of biological role, cecropins have lytic and antibacterial activity against several Gram-positive and Gram-negative bacteria. This chain is Cecropin-A1 (CecA1), found in Drosophila sechellia (Fruit fly).